The sequence spans 390 residues: 3-ketoacyl-CoA thiolase (390 aa).

Cys95 acts as the Acyl-thioester intermediate in catalysis. Catalysis depends on proton acceptor residues His346 and Cys376.

The protein belongs to the thiolase-like superfamily. Thiolase family. In terms of assembly, heterotetramer of two alpha chains (FadB) and two beta chains (FadA).

It localises to the cytoplasm. It carries out the reaction an acyl-CoA + acetyl-CoA = a 3-oxoacyl-CoA + CoA. Its pathway is lipid metabolism; fatty acid beta-oxidation. Functionally, catalyzes the final step of fatty acid oxidation in which acetyl-CoA is released and the CoA ester of a fatty acid two carbons shorter is formed. This is 3-ketoacyl-CoA thiolase from Psychrobacter arcticus (strain DSM 17307 / VKM B-2377 / 273-4).